Here is a 394-residue protein sequence, read N- to C-terminus: Probable peptidoglycan glycosyltransferase FtsW (394 aa).

The Cytoplasmic segment spans residues 1–27 (MSALRSVAGLLQRWLLPARPAGLYDRQ). The helical transmembrane segment at 28-48 (LVVLALALMAVGLVIVASASI) threads the bilayer. Residues 49-64 (PEGIAINNDPFMFVKR) lie on the Periplasmic side of the membrane. The helical transmembrane segment at 65 to 85 (HGLFLVMALGISWFVLQVPMA) threads the bilayer. At 86–88 (RWQ) the chain is on the cytoplasmic side. Residues 89-109 (HYNGPMLVLAILMLVLVLLVG) form a helical membrane-spanning segment. At 110-123 (RSVNGSIRWLPLGP) the chain is on the periplasmic side. A helical membrane pass occupies residues 124 to 144 (FNLQPAEFGKLALFVYLAGYL). The Cytoplasmic portion of the chain corresponds to 145 to 154 (VRRQSEVRER). Residues 155 to 175 (FIGFMKPMAVLFVVAILLLAQ) form a helical membrane-spanning segment. Residue Pro176 is a topological domain, periplasmic. The chain crosses the membrane as a helical span at residues 177-197 (DLGSVVVMFVTSLGMLFLAGA). Position 198 (Arg198) is a topological domain, cytoplasmic. Residues 199–219 (LGQFIGLILVGVSAVVTLVIA) traverse the membrane as a helical segment. Topologically, residues 220–279 (EPYRMRRVTSFLDPWADPFGSGYQLTQSLMAFGRGSWFGEGLGNSIQKMEYLPEAHTDFV) are periplasmic. The helical transmembrane segment at 280-300 (FAILGEELGYAGVLGALFLIF) threads the bilayer. The Cytoplasmic segment spans residues 301 to 322 (ALSFKALKLGHQALVAERLYEG). A helical transmembrane segment spans residues 323-343 (YLAIGIGIWFSFQTFVNVGAA). At 344-354 (SGMMPTKGLTL) the chain is on the periplasmic side. A helical membrane pass occupies residues 355–375 (PLVSYGGSSLIIMMVAVSMLV). The Cytoplasmic portion of the chain corresponds to 376–394 (RIDFELRQASAQARVREVS).

The protein belongs to the SEDS family. FtsW subfamily.

Its subcellular location is the cell inner membrane. It carries out the reaction [GlcNAc-(1-&gt;4)-Mur2Ac(oyl-L-Ala-gamma-D-Glu-L-Lys-D-Ala-D-Ala)](n)-di-trans,octa-cis-undecaprenyl diphosphate + beta-D-GlcNAc-(1-&gt;4)-Mur2Ac(oyl-L-Ala-gamma-D-Glu-L-Lys-D-Ala-D-Ala)-di-trans,octa-cis-undecaprenyl diphosphate = [GlcNAc-(1-&gt;4)-Mur2Ac(oyl-L-Ala-gamma-D-Glu-L-Lys-D-Ala-D-Ala)](n+1)-di-trans,octa-cis-undecaprenyl diphosphate + di-trans,octa-cis-undecaprenyl diphosphate + H(+). It participates in cell wall biogenesis; peptidoglycan biosynthesis. In terms of biological role, peptidoglycan polymerase that is essential for cell division. This chain is Probable peptidoglycan glycosyltransferase FtsW, found in Aeromonas salmonicida (strain A449).